The primary structure comprises 173 residues: Photosystem I assembly protein Ycf3 (173 aa).

3 TPR repeats span residues 35–68, 72–105, and 120–153; these read AFAYYRDGMSAQADGEYSEALENYEEALRLEDDP, SYILYNMGLIYASNGDHHKALELYHEAIDLNPRM, and GEKAKQSGNEDESEALFDKAAEYWKQAIRIAPNN.

The protein belongs to the Ycf3 family.

The protein resides in the cellular thylakoid membrane. Its function is as follows. Essential for the assembly of the photosystem I (PSI) complex. May act as a chaperone-like factor to guide the assembly of the PSI subunits. The polypeptide is Photosystem I assembly protein Ycf3 (Picosynechococcus sp. (strain ATCC 27264 / PCC 7002 / PR-6) (Agmenellum quadruplicatum)).